Consider the following 349-residue polypeptide: Phenylalanine--tRNA ligase alpha subunit (349 aa).

Glu258 is a binding site for Mg(2+).

This sequence belongs to the class-II aminoacyl-tRNA synthetase family. Phe-tRNA synthetase alpha subunit type 1 subfamily. Tetramer of two alpha and two beta subunits. Mg(2+) is required as a cofactor.

The protein resides in the cytoplasm. The catalysed reaction is tRNA(Phe) + L-phenylalanine + ATP = L-phenylalanyl-tRNA(Phe) + AMP + diphosphate + H(+). The sequence is that of Phenylalanine--tRNA ligase alpha subunit from Rickettsia bellii (strain RML369-C).